Reading from the N-terminus, the 411-residue chain is Lissencephaly-1 homolog (411 aa).

One can recognise a LisH domain in the interval Gln9–Thr41. The stretch at Thr56–Ala83 forms a coiled coil. 7 WD repeats span residues Gly106–Lys147, Gly148–Lys187, Gly191–Thr230, Gly233–Glu272, Asp275–Thr334, Gly337–Thr376, and Ala379–Arg411.

This sequence belongs to the WD repeat LIS1/nudF family.

It is found in the cytoplasm. The protein localises to the cytoskeleton. Its subcellular location is the microtubule organizing center. It localises to the centrosome. Positively regulates the activity of the minus-end directed microtubule motor protein dynein. May enhance dynein-mediated microtubule sliding by targeting dynein to the microtubule plus end. Required for several dynein- and microtubule-dependent processes. This Drosophila persimilis (Fruit fly) protein is Lissencephaly-1 homolog.